A 257-amino-acid chain; its full sequence is Acetylglutamate kinase (257 aa).

Substrate contacts are provided by residues 43–44, arginine 65, and asparagine 157; that span reads GG.

This sequence belongs to the acetylglutamate kinase family. ArgB subfamily.

It is found in the cytoplasm. It catalyses the reaction N-acetyl-L-glutamate + ATP = N-acetyl-L-glutamyl 5-phosphate + ADP. It functions in the pathway amino-acid biosynthesis; L-arginine biosynthesis; N(2)-acetyl-L-ornithine from L-glutamate: step 2/4. Its function is as follows. Catalyzes the ATP-dependent phosphorylation of N-acetyl-L-glutamate. In Pasteurella multocida (strain Pm70), this protein is Acetylglutamate kinase.